The chain runs to 452 residues: Selenide, water dikinase 2 (452 aa).

The residue at position 2 (alanine 2) is an N-acetylalanine. Residue serine 49 is modified to Phosphoserine. The active site involves selenocysteine 63. Residue selenocysteine 63 is a non-standard amino acid, selenocysteine. Position 66 (lysine 66) interacts with ATP. Positions 86 to 111 are disordered; that stretch reads PPLTSGLVGGQEETVQEGGLSTRPGP. The segment covering 95–105 has biased composition (low complexity); that stretch reads GQEETVQEGGL. ATP contacts are provided by residues 121-123, aspartate 141, aspartate 164, and 215-218; these read GMD and GGQT. Aspartate 123 serves as a coordination point for Mg(2+). Aspartate 164 is a binding site for Mg(2+). Aspartate 319 lines the Mg(2+) pocket.

The protein belongs to the selenophosphate synthase 1 family. Class I subfamily. As to quaternary structure, homodimer. Requires Mg(2+) as cofactor. Truncated SEPHS2 proteins produced by failed UGA/Sec decoding are ubiquitinated by the CRL2(KLHDC3) complex, which recognizes the glycine (Gly) at the C-terminus of truncated SEPHS2 proteins.

The enzyme catalyses hydrogenselenide + ATP + H2O = selenophosphate + AMP + phosphate + 2 H(+). Functionally, synthesizes selenophosphate from selenide and ATP. The sequence is that of Selenide, water dikinase 2 (Sephs2) from Mus musculus (Mouse).